The chain runs to 155 residues: SsrA-binding protein (155 aa).

Belongs to the SmpB family.

The protein localises to the cytoplasm. In terms of biological role, required for rescue of stalled ribosomes mediated by trans-translation. Binds to transfer-messenger RNA (tmRNA), required for stable association of tmRNA with ribosomes. tmRNA and SmpB together mimic tRNA shape, replacing the anticodon stem-loop with SmpB. tmRNA is encoded by the ssrA gene; the 2 termini fold to resemble tRNA(Ala) and it encodes a 'tag peptide', a short internal open reading frame. During trans-translation Ala-aminoacylated tmRNA acts like a tRNA, entering the A-site of stalled ribosomes, displacing the stalled mRNA. The ribosome then switches to translate the ORF on the tmRNA; the nascent peptide is terminated with the 'tag peptide' encoded by the tmRNA and targeted for degradation. The ribosome is freed to recommence translation, which seems to be the essential function of trans-translation. The sequence is that of SsrA-binding protein from Bacillus cytotoxicus (strain DSM 22905 / CIP 110041 / 391-98 / NVH 391-98).